Consider the following 379-residue polypeptide: Guanine nucleotide-binding protein subunit alpha-12 (379 aa).

A lipid anchor (S-palmitoyl cysteine) is attached at cysteine 11. The 326-residue stretch at 54 to 379 (RLVKILLLGA…QENLKDIMLQ (326 aa)) folds into the G-alpha domain. The tract at residues 57–70 (KILLLGAGESGKST) is G1 motif. GTP contacts are provided by residues 65–70 (ESGKST) and 200–203 (LLAR). Serine 69 lines the Mg(2+) pocket. The tract at residues 198–206 (DILLARKAT) is G2 motif. Residue threonine 206 coordinates Mg(2+). At threonine 206 the chain carries Phosphothreonine. Positions 221-230 (FKMVDVGGQR) are G3 motif. Positions 290-297 (ILFLNKMD) are G4 motif. GTP is bound by residues 294–297 (NKMD) and alanine 351. Residues 349–354 (TTAIDT) are G5 motif.

It belongs to the G-alpha family. G(12) subfamily. As to quaternary structure, g proteins are composed of 3 units; alpha, beta and gamma. The alpha chain contains the guanine nucleotide binding site. Interacts with UBXD5. Interacts (in GTP-bound form) with PPP5C (via TPR repeats); activates PPP5C phosphatase activity and translocates PPP5C to the cell membrane. Interacts with RGS22. Interacts (via N-terminus) with NAPA; the interaction promotes CDH5 localization to plasma membrane. Interacts with CTNND1 (via N-terminus); the interaction regulates CDH1-mediated cell-cell adhesion. Interacts with PPP2R1A; the interaction promotes protein phosphatase 2A activation causing dephosphorylation of MAPT. Interacts (in GTP-bound form) with ARHGEF1. Interacts (in GTP-bound form) with ARHGEF11 (via RGS domain). Interacts (in GTP-bound form) with ARHGEF12 (via RGS domain).

The protein resides in the cell membrane. The protein localises to the lateral cell membrane. Its subcellular location is the cytoplasm. Functionally, guanine nucleotide-binding proteins (G proteins) are involved as modulators or transducers in various transmembrane signaling systems. Activates effector molecule RhoA by binding and activating RhoGEFs (ARHGEF12/LARG). GNA12-dependent Rho signaling subsequently regulates transcription factor AP-1 (activating protein-1). GNA12-dependent Rho signaling also regulates protein phosphatese 2A activation causing dephosphorylation of its target proteins. Promotes tumor cell invasion and metastasis by activating RhoA/ROCK signaling pathway and up-regulating pro-inflammatory cytokine production. Inhibits CDH1-mediated cell adhesion in process independent from Rho activation. Together with NAPA promotes CDH5 localization to plasma membrane. May play a role in the control of cell migration through the TOR signaling cascade. The chain is Guanine nucleotide-binding protein subunit alpha-12 (Gna12) from Rattus norvegicus (Rat).